The chain runs to 1863 residues: Transient receptor potential cation channel subfamily M member 7 (1863 aa).

The residue at position 1 (Met1) is an N-acetylmethionine. At 1 to 850 (MSQKSWIEST…ITRKFYAFYH (850 aa)) the chain is on the cytoplasmic side. Ser101 is modified (phosphoserine). Residues 544 to 555 (NRRSGRNTSSST) are compositionally biased toward low complexity. The interval 544–574 (NRRSGRNTSSSTPQLRKSHETFGNRADKKEK) is disordered. Positions 560–573 (KSHETFGNRADKKE) are enriched in basic and acidic residues. Residues 851–876 (APIVKFWFNTLAYLGFLMLYTFVVLV) form a helical membrane-spanning segment. Residues 877-882 (KMEQLP) are Extracellular-facing. A helical transmembrane segment spans residues 883–904 (SVQEWIVIAYIFTYAIEKVREV). Topologically, residues 905–923 (FMSEAGKISQKIKVWFSDY) are cytoplasmic. A helical transmembrane segment spans residues 924-943 (FNVSDTIAIISFFVGFGLRF). Over 944 to 956 (GAKWNYINAYDNH) the chain is Extracellular. A helical membrane pass occupies residues 957-980 (VFVAGRLIYCLNIIFWYVRLLDFL). Residues 981 to 999 (AVNQQAGPYVMMIGKMVAN) lie on the Cytoplasmic side of the membrane. A helical membrane pass occupies residues 1000–1023 (MFYIVVIMALVLLSFGVPRKAILY). Topologically, residues 1024-1025 (PH) are extracellular. The segment at residues 1026–1066 (EEPSWSLAKDIVFHPYWMIFGEVYAYEIDVCANDSTLPTIC) is an intramembrane region (pore-forming). Residues 1067 to 1069 (GPG) lie on the Extracellular side of the membrane. A helical membrane pass occupies residues 1070–1098 (TWLTPFLQAVYLFVQYIIMVNLLIAFFNN). Over 1099–1863 (VYLQVKAISN…EATNSVRLML (765 aa)) the chain is Cytoplasmic. S-palmitoyl cysteine attachment occurs at residues Cys1143, Cys1144, and Cys1146. Thr1163 carries the phosphothreonine modification. Residues Ser1191, Ser1193, Ser1224, Ser1255, and Ser1258 each carry the phosphoserine modification. Positions 1198–1250 (RVTFERVEQMSIQIKEVGDRVNYIKRSLQSLDSQIGHLQDLSALTVDTLKTLT) form a coiled coil. Phosphothreonine is present on Thr1265. A phosphoserine mark is found at Ser1300, Ser1357, Ser1360, Ser1385, Ser1386, Ser1389, Ser1394, Ser1395, and Ser1403. The tract at residues 1380–1418 (NQKLGSSPNSSPHMSSPPTKFSVSTPSQPSCKSHLESTT) is disordered. Residues 1385 to 1397 (SSPNSSPHMSSPP) show a composition bias toward low complexity. Positions 1398 to 1410 (TKFSVSTPSQPSC) are enriched in polar residues. Thr1404 carries the phosphothreonine modification. Residues Ser1406 and Ser1445 each carry the phosphoserine modification. Thr1454 carries the post-translational modification Phosphothreonine. Ser1455 carries the post-translational modification Phosphoserine. A phosphothreonine mark is found at Thr1466 and Thr1470. Ser1491, Ser1498, Ser1502, Ser1511, Ser1525, and Ser1531 each carry phosphoserine. The tract at residues 1498-1539 (SRRASTEDSPEVDSKAALLPDWLRDRPSNREMPSEGGTLNGL) is disordered. A compositionally biased stretch (basic and acidic residues) spans 1519 to 1530 (WLRDRPSNREMP). Phosphothreonine is present on Thr1535. Residue Ser1541 is modified to Phosphoserine. Thr1549 is modified (phosphothreonine). Phosphoserine occurs at positions 1565 and 1567. Thr1581 is modified (phosphothreonine). An Alpha-type protein kinase domain is found at 1592–1822 (ILNNSMSSWS…CCRKLKLPDL (231 aa)). Ser1596 and Ser1613 each carry phosphoserine. Positions 1619, 1620, 1621, 1622, and 1646 each coordinate ADP. Phosphoserine is present on Ser1658. Residue Thr1683 is modified to Phosphothreonine. Residues Glu1718, Glu1719, and Met1721 each contribute to the ADP site. His1751 is a Zn(2+) binding site. Residue Asp1765 is the Proton acceptor of the active site. Asp1775 is an ADP binding site. Ser1777 carries the phosphoserine modification. Residues His1808, Cys1810, and Cys1814 each coordinate Zn(2+). Residue Thr1828 is modified to Phosphothreonine. Residues 1838–1863 (ESSDLNLQSGNSTKESEATNSVRLML) are disordered. The segment covering 1841–1863 (DLNLQSGNSTKESEATNSVRLML) has biased composition (polar residues). Phosphoserine is present on residues Ser1846, Ser1849, and Ser1858.

This sequence in the C-terminal section; belongs to the protein kinase superfamily. Alpha-type protein kinase family. ALPK subfamily. The protein in the N-terminal section; belongs to the transient receptor (TC 1.A.4) family. LTrpC subfamily. TRPM7 sub-subfamily. As to quaternary structure, homodimer. Homotetramer. Forms heteromers with TRPM6; heteromeric channels are functionally different from the homomeric channels. Interacts with PLCB1. Zn(2+) is required as a cofactor. In terms of processing, palmitoylated; palmitoylation at Cys-1143, Cys-1144 and Cys-1146 promotes TRPM7 trafficking from the Golgi to the surface membrane. Post-translationally, autophosphorylated; autophosphorylation regulates TRPM7 kinase activity towards its substrates. The C-terminal kinase domain can be cleaved from the channel segment in a cell-type-specific fashion. TRPM7 is cleaved by caspase-8, dissociating the kinase from the ion-conducting pore. The cleaved kinase fragments (M7CKs) can translocate to the cell nucleus and binds chromatin-remodeling complex proteins in a Zn(2+)-dependent manner to ultimately phosphorylate specific Ser/Thr residues of histones. In terms of tissue distribution, found to be expressed in brain and skeletal muscle, with stronger signals in kidney, heart, liver and spleen.

It is found in the cell membrane. The protein localises to the cytoplasmic vesicle membrane. The protein resides in the nucleus. The catalysed reaction is L-seryl-[protein] + ATP = O-phospho-L-seryl-[protein] + ADP + H(+). The enzyme catalyses L-threonyl-[protein] + ATP = O-phospho-L-threonyl-[protein] + ADP + H(+). It catalyses the reaction Mg(2+)(in) = Mg(2+)(out). It carries out the reaction Ca(2+)(in) = Ca(2+)(out). The catalysed reaction is Zn(2+)(in) = Zn(2+)(out). Channel displays constitutive activity. Channel activity is negatively regulated by cytosolic Mg(2+), Mg-ATP and low intracellular pH. Resting free cytosolic Mg(2+) and Mg-ATP concentrations seem to be sufficient to block native TRPM7 channel activity. TRPM7 channel activity is highly dependent on membrane levels of phosphatidylinositol 4,5 bisphosphate (PIP2). PIP2 hydrolysis negatively regulates TRPM7 channel activity. TRPM7 kinase activity does not affect channel activity. The kinase activity is controlled through the autophosphorylation of a serine/threonine-rich region located N-terminal to the catalytic domain. Its function is as follows. Bifunctional protein that combines an ion channel with an intrinsic kinase domain, enabling it to modulate cellular functions either by conducting ions through the pore or by phosphorylating downstream proteins via its kinase domain. The channel is highly permeable to divalent cations, specifically calcium (Ca2+), magnesium (Mg2+) and zinc (Zn2+) and mediates their influx. Controls a wide range of biological processes such as Ca2(+), Mg(2+) and Zn(2+) homeostasis, vesicular Zn(2+) release channel and intracellular Ca(2+) signaling, embryonic development, immune responses, cell motility, proliferation and differentiation. The C-terminal alpha-kinase domain autophosphorylates cytoplasmic residues of TRPM7. TRPM7 phosphorylates SMAD2, suggesting that TRPM7 kinase may play a role in activating SMAD signaling pathways. In vitro, TRPM7 kinase phosphorylates ANXA1 (annexin A1), myosin II isoforms and a variety of proteins with diverse cellular functions. The cleaved channel exhibits substantially higher current and potentiates Fas receptor signaling. In terms of biological role, the C-terminal kinase domain can be cleaved from the channel segment in a cell-type-specific fashion. In immune cells, the TRPM7 kinase domain is clipped from the channel domain by caspases in response to Fas-receptor stimulation. The cleaved kinase fragments can translocate to the nucleus, and bind chromatin-remodeling complex proteins in a Zn(2+)-dependent manner to ultimately phosphorylate specific Ser/Thr residues of histones known to be functionally important for cell differentiation and embryonic development. The protein is Transient receptor potential cation channel subfamily M member 7 (Trpm7) of Mus musculus (Mouse).